Here is a 1905-residue protein sequence, read N- to C-terminus: Bromodomain adjacent to zinc finger domain protein 2A (1905 aa).

Disordered stretches follow at residues M1–S59 and T362–S434. Polar residues-rich tracts occupy residues T35–S59, L379–D391, and T399–Q420. T507 is modified (phosphothreonine). Phosphoserine is present on S509. The region spanning I546–P617 is the MBD domain. T548 bears the Phosphothreonine mark. Position 613 is a phosphoserine (S613). The disordered stretch occupies residues I648–K792. 2 DNA-binding regions (a.T hook) span residues T649–A661 and K670–T682. Basic and acidic residues predominate over residues R656–K668. Basic residues predominate over residues V669–K678. An N6-acetyllysine; by KAT8 modification is found at K680. Residues N686–K709 show a composition bias toward basic and acidic residues. A coiled-coil region spans residues L693 to K792. Residues I710 to V721 show a composition bias toward basic residues. The span at E725–A734 shows a compositional bias: polar residues. Basic and acidic residues-rich tracts occupy residues K739 to K748 and A756 to K792. K799 carries the N6-acetyllysine modification. The 66-residue stretch at S848 to F913 folds into the DDT domain. Residue K866 forms a Glycyl lysine isopeptide (Lys-Gly) (interchain with G-Cter in SUMO2) linkage. S1051 is subject to Phosphoserine. Residues K1150 and K1172 each participate in a glycyl lysine isopeptide (Lys-Gly) (interchain with G-Cter in SUMO2) cross-link. 3 disordered regions span residues S1178–Q1220, L1283–D1318, and M1330–S1412. A Phosphoserine modification is found at S1184. The segment at residues A1186 to G1198 is a DNA-binding region (a.T hook 3). Residues L1283–S1293 show a composition bias toward low complexity. The span at E1306 to S1315 shows a compositional bias: acidic residues. The segment covering D1345 to P1359 has biased composition (polar residues). At S1397 the chain carries Phosphoserine. Positions P1404–K1416 form a DNA-binding region, a.T hook 4. A Phosphoserine modification is found at S1559. Glycyl lysine isopeptide (Lys-Gly) (interchain with G-Cter in SUMO2) cross-links involve residues K1676 and K1709. A PHD-type zinc finger spans residues K1676–Q1726. Disordered regions lie at residues Q1734–E1755 and E1769–R1789. Phosphoserine is present on residues S1747, S1770, S1783, and S1785. The Bromo domain maps to R1793–F1897.

The protein belongs to the WAL family. Component of the NoRC-1 ISWI chromatin remodeling complex at least composed of SMARCA1 and BAZ2A/TIP5, which regulates the spacing of histone octamers on the DNA template to facilitate access to DNA. Within the NoRC-1 ISWI chromatin remodeling complex interacts with SMARCA1; the interaction is direct. Component of the NoRC-5 ISWI chromatin remodeling complex (also called the NoRC nucleolar-remodeling complex), at least composed of SMARCA5/SNF2H and BAZ2A/TIP5, which regulates the spacing of histone octamers on the DNA template to facilitate access to DNA. Within the NoRC-5 ISWI chromatin remodeling complexes interacts with SMARCA5/SNF2H; the interaction is direct. Interacts with TTF1; the interaction is required for recruitment of the NoRC-5 ISWI chromatin remodeling complex to rDNA. Interacts with HDAC1. Interacts with SIN3A. Interacts with DNMT1 and DNM3B. Interacts with BEND3 and USP21. Acetylation at Lys-680 by KAT8/MOF promotes its dissociation from pRNA, affecting heterochromatin formation, nucleosome positioning and rDNA silencing. Deacetylation by SIRT1 in late S phase enhances pRNA-binding, allowing de novo DNA methylation and heterochromatin formation. Acetylation is high during S phase and declines to background levels in late S phase when the silent copies of rRNA genes are replicated. Post-translationally, ubiquitinated. Deubiquitinated by USP21 leading to its stabilization. As to expression, expressed at moderate levels in most tissues analyzed, including heart, brain, placenta, lung, skeletal muscle, kidney and pancreas.

It is found in the nucleus. It localises to the nucleolus. Functionally, regulatory subunit of the ATP-dependent NoRC-1 and NoRC-5 ISWI chromatin remodeling complexes, which form ordered nucleosome arrays on chromatin and facilitate access to DNA during DNA-templated processes such as DNA replication, transcription, and repair. Both complexes regulate the spacing of nucleosomes along the chromatin and have the ability to slide mononucleosomes to the center of a DNA template. Directly stimulates the ATPase activity of SMARCA5 in the NoRC-5 ISWI chromatin remodeling complex. The NoRC-1 ISWI chromatin remodeling complex has a lower ATP hydrolysis rate than the NoRC-5 ISWI chromatin remodeling complex. Within the NoRC-5 ISWI chromatin remodeling complex, mediates silencing of a fraction of rDNA by recruiting histone-modifying enzymes and DNA methyltransferases, leading to heterochromatin formation and transcriptional silencing. In the complex, it plays a central role by being recruited to rDNA and by targeting chromatin modifying enzymes such as HDAC1, leading to repress RNA polymerase I transcription. Recruited to rDNA via its interaction with TTF1 and its ability to recognize and bind histone H4 acetylated on 'Lys-16' (H4K16ac), leading to deacetylation of H4K5ac, H4K8ac, H4K12ac but not H4K16ac. Specifically binds pRNAs, 150-250 nucleotide RNAs that are complementary in sequence to the rDNA promoter; pRNA-binding is required for heterochromatin formation and rDNA silencing. The protein is Bromodomain adjacent to zinc finger domain protein 2A (BAZ2A) of Homo sapiens (Human).